The sequence spans 475 residues: Ribonuclease Y (475 aa).

The tract at residues 34-73 is disordered; it reads EFERESRERRNELQRVERRLMQKEESLDKKSETLEQKDDR. A KH domain is found at 165–228; the sequence is TVTVVQLPND…EVARIALEKL (64 aa). Residues 291-384 form the HD domain; it reads VLKHAIEVSH…VTAADAISAA (94 aa).

Belongs to the RNase Y family.

Functionally, endoribonuclease that initiates mRNA decay. This is Ribonuclease Y from Alkaliphilus metalliredigens (strain QYMF).